The primary structure comprises 64 residues: Small ribosomal subunit protein bS21 (64 aa).

It belongs to the bacterial ribosomal protein bS21 family.

This chain is Small ribosomal subunit protein bS21, found in Amoebophilus asiaticus (strain 5a2).